We begin with the raw amino-acid sequence, 209 residues long: ATP-dependent Clp protease proteolytic subunit (209 aa).

Residue S106 is the Nucleophile of the active site. H131 is an active-site residue.

The protein belongs to the peptidase S14 family. As to quaternary structure, fourteen ClpP subunits assemble into 2 heptameric rings which stack back to back to give a disk-like structure with a central cavity, resembling the structure of eukaryotic proteasomes.

The protein localises to the cytoplasm. It catalyses the reaction Hydrolysis of proteins to small peptides in the presence of ATP and magnesium. alpha-casein is the usual test substrate. In the absence of ATP, only oligopeptides shorter than five residues are hydrolyzed (such as succinyl-Leu-Tyr-|-NHMec, and Leu-Tyr-Leu-|-Tyr-Trp, in which cleavage of the -Tyr-|-Leu- and -Tyr-|-Trp bonds also occurs).. Functionally, cleaves peptides in various proteins in a process that requires ATP hydrolysis. Has a chymotrypsin-like activity. Plays a major role in the degradation of misfolded proteins. The protein is ATP-dependent Clp protease proteolytic subunit of Brucella suis biovar 1 (strain 1330).